The sequence spans 283 residues: Phosphatidylserine decarboxylase proenzyme (283 aa).

Active-site charge relay system; for autoendoproteolytic cleavage activity residues include Asp-89, His-146, and Ser-249. Ser-249 (schiff-base intermediate with substrate; via pyruvic acid; for decarboxylase activity) is an active-site residue. Ser-249 carries the post-translational modification Pyruvic acid (Ser); by autocatalysis.

Belongs to the phosphatidylserine decarboxylase family. PSD-B subfamily. Prokaryotic type I sub-subfamily. As to quaternary structure, heterodimer of a large membrane-associated beta subunit and a small pyruvoyl-containing alpha subunit. Pyruvate serves as cofactor. Post-translationally, is synthesized initially as an inactive proenzyme. Formation of the active enzyme involves a self-maturation process in which the active site pyruvoyl group is generated from an internal serine residue via an autocatalytic post-translational modification. Two non-identical subunits are generated from the proenzyme in this reaction, and the pyruvate is formed at the N-terminus of the alpha chain, which is derived from the carboxyl end of the proenzyme. The autoendoproteolytic cleavage occurs by a canonical serine protease mechanism, in which the side chain hydroxyl group of the serine supplies its oxygen atom to form the C-terminus of the beta chain, while the remainder of the serine residue undergoes an oxidative deamination to produce ammonia and the pyruvoyl prosthetic group on the alpha chain. During this reaction, the Ser that is part of the protease active site of the proenzyme becomes the pyruvoyl prosthetic group, which constitutes an essential element of the active site of the mature decarboxylase.

Its subcellular location is the cell membrane. The enzyme catalyses a 1,2-diacyl-sn-glycero-3-phospho-L-serine + H(+) = a 1,2-diacyl-sn-glycero-3-phosphoethanolamine + CO2. It functions in the pathway phospholipid metabolism; phosphatidylethanolamine biosynthesis; phosphatidylethanolamine from CDP-diacylglycerol: step 2/2. In terms of biological role, catalyzes the formation of phosphatidylethanolamine (PtdEtn) from phosphatidylserine (PtdSer). This Legionella pneumophila (strain Lens) protein is Phosphatidylserine decarboxylase proenzyme.